Consider the following 404-residue polypeptide: 4-hydroxy-3-methylbut-2-en-1-yl diphosphate synthase (ferredoxin) (404 aa).

[4Fe-4S] cluster-binding residues include C313, C316, C347, and E354.

Belongs to the IspG family. It depends on [4Fe-4S] cluster as a cofactor.

The catalysed reaction is (2E)-4-hydroxy-3-methylbut-2-enyl diphosphate + 2 oxidized [2Fe-2S]-[ferredoxin] + H2O = 2-C-methyl-D-erythritol 2,4-cyclic diphosphate + 2 reduced [2Fe-2S]-[ferredoxin] + H(+). The protein operates within isoprenoid biosynthesis; isopentenyl diphosphate biosynthesis via DXP pathway; isopentenyl diphosphate from 1-deoxy-D-xylulose 5-phosphate: step 5/6. In terms of biological role, converts 2C-methyl-D-erythritol 2,4-cyclodiphosphate (ME-2,4cPP) into 1-hydroxy-2-methyl-2-(E)-butenyl 4-diphosphate. The sequence is that of 4-hydroxy-3-methylbut-2-en-1-yl diphosphate synthase (ferredoxin) from Crocosphaera subtropica (strain ATCC 51142 / BH68) (Cyanothece sp. (strain ATCC 51142)).